The following is a 169-amino-acid chain: Sorting nexin-24 (169 aa).

The residue at position 1 (methionine 1) is an N-acetylmethionine. The PX domain maps to 1–125 (MEVYIPSFRY…SFDETESEES (125 aa)). Residues arginine 38, serine 40, lysine 61, and arginine 74 each contribute to the a 1,2-diacyl-sn-glycero-3-phospho-(1D-myo-inositol-3-phosphate) site. Residues serine 113 and serine 116 each carry the phosphoserine modification.

Belongs to the sorting nexin family.

It is found in the cytoplasmic vesicle membrane. In terms of biological role, may be involved in several stages of intracellular trafficking. This Homo sapiens (Human) protein is Sorting nexin-24 (SNX24).